A 170-amino-acid chain; its full sequence is Methanogen homoaconitase small subunit (170 aa).

The YLRT motif lies at Y24 to T27.

Belongs to the LeuD family. LeuD type 2 subfamily. As to quaternary structure, heterotetramer of 2 HacA and 2 HacB proteins. Cannot form a complex with LeuC.

The enzyme catalyses (2R)-homocitrate = (2R,3S)-homoisocitrate. It carries out the reaction (2R)-homocitrate = cis-homoaconitate + H2O. It catalyses the reaction (2R,3S)-homoisocitrate = cis-homoaconitate + H2O. The catalysed reaction is cis-(homo)2aconitate + H2O = (2R,3S)-iso(homo)2citrate. The enzyme catalyses cis-(homo)3aconitate + H2O = (2R,3S)-iso(homo)3citrate. It carries out the reaction (R)-malate = maleate + H2O. It catalyses the reaction cis-aconitate + H2O = D-threo-isocitrate. It functions in the pathway organic acid metabolism; 2-oxosuberate biosynthesis. In terms of biological role, component of a hydro-lyase with broad substrate specificity for cis-unsaturated tricarboxylic acids. Catalyzes both the reversible dehydration of (R)-homocitrate ((R)-2-hydroxybutane-1,2,4-tricarboxylate) to produce cis-homoaconitate ((Z)-but-1-ene-1,2,4-tricarboxylate), and its hydration to homoisocitrate ((1R,2S)-1-hydroxybutane-1,2,4-tricarboxylate). Is also able to hydrate the analogous longer chain substrates cis-homo(2)-aconitate, cis-homo(3)-aconitate, and even the non-physiological cis-homo(4)-aconitate with similar efficiency. These reactions are part of the biosynthesis pathway of coenzyme B. Can also catalyze the hydration of maleate to (R)-malate, and that of cis-aconitate. Cannot catalyze the hydration of citraconate and the dehydration of (S)-homocitrate, citramalate, 2-isopropylmalate, 3-isopropylmalate, citrate or threo-DL-isocitrate. This is Methanogen homoaconitase small subunit (hacB) from Methanocaldococcus jannaschii (strain ATCC 43067 / DSM 2661 / JAL-1 / JCM 10045 / NBRC 100440) (Methanococcus jannaschii).